Consider the following 872-residue polypeptide: Rho guanine nucleotide exchange factor scd1 (872 aa).

A disordered region spans residues 1 to 29 (MAYFQDRKTSSRSLPSYINHSTQNLVGPR). Over residues 11–25 (SRSLPSYINHSTQNL) the composition is skewed to polar residues. Residues 82 to 198 (DSIHREALNS…TIELLLKKYE (117 aa)) enclose the Calponin-homology (CH) domain. The DH domain occupies 228 to 402 (SGRRVTAELY…VRVANQVNET (175 aa)). The PH domain occupies 426 to 547 (SLQYFGQLLV…WMSVLNRLLW (122 aa)). Disordered stretches follow at residues 553–667 (SPKD…STAS) and 743–765 (MKSD…STST). Residues 560–584 (AASTPANPVYNRSSSQTSKGYNSSD) are compositionally biased toward polar residues. At S583 the chain carries Phosphoserine. The segment covering 599 to 616 (SPTSISSPSSKSSPFTKT) has biased composition (low complexity). Residues 617 to 633 (TSKDTKSATTTDERPSD) show a composition bias toward basic and acidic residues. Low complexity-rich tracts occupy residues 645-667 (TSSL…STAS) and 748-765 (SLLP…STST). In terms of domain architecture, PB1 spans 772-859 (TTNVKIRLRL…FELMDPVHNK (88 aa)).

As to quaternary structure, scd1, scd2, cdc42, and ras1, in its GTP-bound state, act cooperatively to form a protein complex. Interacts with moe1 and cdc42.

Its subcellular location is the nucleus. The protein localises to the cytoplasm. Functionally, required for mating and morphogenesis. May contain a cryptic binding site for cdc42 that is enhanced by binding Ras. Interacts directly with scd2. Promotes the exchange of cdc42-bound GDP by GTP. Involved in septation and stimulates the elongation of conjugation tubes. The chain is Rho guanine nucleotide exchange factor scd1 (scd1) from Schizosaccharomyces pombe (strain 972 / ATCC 24843) (Fission yeast).